We begin with the raw amino-acid sequence, 334 residues long: Malate dehydrogenase (334 aa).

NAD(+) is bound at residue 17–23 (GAAGQIG). Arg-98 and Arg-104 together coordinate substrate. Residues Asn-111, Gln-118, and 135 to 137 (VGN) contribute to the NAD(+) site. Substrate contacts are provided by Asn-137 and Arg-168. His-193 acts as the Proton acceptor in catalysis.

This sequence belongs to the LDH/MDH superfamily. MDH type 2 family.

It carries out the reaction (S)-malate + NAD(+) = oxaloacetate + NADH + H(+). Catalyzes the reversible oxidation of malate to oxaloacetate. This is Malate dehydrogenase from Deinococcus geothermalis (strain DSM 11300 / CIP 105573 / AG-3a).